Reading from the N-terminus, the 938-residue chain is Ankyrin repeat and LEM domain-containing protein 2 (938 aa).

The Lumenal portion of the chain corresponds to 1–12 (MLWPRLAAAEWA). A helical; Signal-anchor for type III membrane protein transmembrane segment spans residues 13-32 (ALAWELLGASVLLIAVRWLV). The Cytoplasmic segment spans residues 33–938 (RRLGPRPGGL…MARLAELAAL (906 aa)). Positions 69 to 113 (LARLKLLNPDDLREEIVKAGLKCGPITSTTRFIFEKKLAQALLEQ) constitute an LEM domain. Ser259 and Ser268 each carry phosphoserine. An ANK repeat occupies 411-440 (GYDTPLHFACKFGNADVVNVLSSHHLIVKN). Phosphoserine is present on residues Ser488, Ser496, Ser512, and Ser528. Positions 609-627 (GKKAQQETGEREASCRDKA) are enriched in basic and acidic residues. The tract at residues 609-636 (GKKAQQETGEREASCRDKATTSGSNSIS) is disordered. Residues Ser662, Ser804, Ser896, and Ser914 each carry the phosphoserine modification. The disordered stretch occupies residues 870 to 924 (RQSWPSPAVKGRFKSQLPDLSGPHSYSPGRNSVAGSNPAKPGLGSPGRYSPVHGS).

This sequence belongs to the ANKLE2 family. As to quaternary structure, interacts with BAF/BANF1. Interacts with protein phosphatase 2A (PP2A) components PPP2C (PPP2CA or PPP2CB) and PPP2R1A. In terms of assembly, (Microbial infection) May interact with non-structural protein 4A/NS4A from Zika virus strains Mr-766 or French Polynesia 10087PF/2013; the interaction may inhibit ANKLE2 function and contribute to defects in brain development, such as microcephaly.

The protein localises to the endoplasmic reticulum membrane. Its function is as follows. Involved in mitotic nuclear envelope reassembly by promoting dephosphorylation of BAF/BANF1 during mitotic exit. Coordinates the control of BAF/BANF1 dephosphorylation by inhibiting VRK1 kinase and promoting dephosphorylation of BAF/BANF1 by protein phosphatase 2A (PP2A), thereby facilitating nuclear envelope assembly. May regulate nuclear localization of VRK1 in non-dividing cells. It is unclear whether it acts as a real PP2A regulatory subunit or whether it is involved in recruitment of the PP2A complex. Involved in brain development. The chain is Ankyrin repeat and LEM domain-containing protein 2 (ANKLE2) from Homo sapiens (Human).